A 203-amino-acid polypeptide reads, in one-letter code: Orotate phosphoribosyltransferase (203 aa).

Residues R94, K98, H100, and 120–128 (EDLISTGGS) each bind 5-phospho-alpha-D-ribose 1-diphosphate. S124 contacts orotate.

The protein belongs to the purine/pyrimidine phosphoribosyltransferase family. PyrE subfamily. In terms of assembly, homodimer. It depends on Mg(2+) as a cofactor.

The catalysed reaction is orotidine 5'-phosphate + diphosphate = orotate + 5-phospho-alpha-D-ribose 1-diphosphate. The protein operates within pyrimidine metabolism; UMP biosynthesis via de novo pathway; UMP from orotate: step 1/2. Functionally, catalyzes the transfer of a ribosyl phosphate group from 5-phosphoribose 1-diphosphate to orotate, leading to the formation of orotidine monophosphate (OMP). This is Orotate phosphoribosyltransferase from Staphylococcus aureus (strain COL).